Consider the following 683-residue polypeptide: Phenoloxidase 3 (683 aa).

The propeptide occupies 1 to 48; sequence MADKKNLLLLFDHPTEPVFMDKGGNGTVFDVPASYVTDRYNKMCKKVQ. An N-linked (GlcNAc...) asparagine glycan is attached at Asn25. Residues His209, His213, and His239 each coordinate Cu cation. Catalysis depends on Glu351, which acts as the Proton acceptor. Residue Asn358 is glycosylated (N-linked (GlcNAc...) asparagine). His366, His370, and His406 together coordinate Cu cation. N-linked (GlcNAc...) asparagine glycans are attached at residues Asn492 and Asn514. Intrachain disulfides connect Cys574-Cys617 and Cys576-Cys624.

Belongs to the tyrosinase family. It depends on Cu(2+) as a cofactor. In terms of processing, upon activation, a trypsin type protease cleaves prophenol oxidase to yield the active enzyme.

The protein localises to the secreted. It carries out the reaction 2 L-dopa + O2 = 2 L-dopaquinone + 2 H2O. The catalysed reaction is L-tyrosine + O2 = L-dopaquinone + H2O. In terms of biological role, this is a copper-containing oxidase that functions in the formation of pigments such as melanins and other polyphenolic compounds. Catalyzes the rate-limiting conversions of tyrosine to DOPA, DOPA to DOPA-quinone and possibly 5,6 dihydroxyindole to indole-5'6 quinone. This is Phenoloxidase 3 (PPO3) from Drosophila erecta (Fruit fly).